The chain runs to 348 residues: 4-hydroxy-2-oxovalerate aldolase 2 (348 aa).

In terms of domain architecture, Pyruvate carboxyltransferase spans 5 to 256 (LQICDSTLRD…EARIKLFDAL (252 aa)). Position 13–14 (13–14 (RD)) interacts with substrate. Asp-14 is a binding site for Mn(2+). Catalysis depends on His-17, which acts as the Proton acceptor. Substrate-binding residues include Ser-168 and His-195. The Mn(2+) site is built by His-195 and His-197.

The protein belongs to the 4-hydroxy-2-oxovalerate aldolase family.

It carries out the reaction (S)-4-hydroxy-2-oxopentanoate = acetaldehyde + pyruvate. This is 4-hydroxy-2-oxovalerate aldolase 2 from Salinispora arenicola (strain CNS-205).